Here is a 547-residue protein sequence, read N- to C-terminus: MKFETTKNKLHGNAYYQAQFQDPIKFTTGSATPASYNQFIDALRERLTGGLIYGIPVLRDPSTVEKPNQYVTVELSYSDTVSIQLGIDLTNAYVVAYRAGSESFFFRNAPASASTYLFTGTQQYSLPFDGNYDDLEKWAHQSRQRISLGLEALRQGIKFLRSGASDDEEIARTLIVIIQMVAEAARFRYVSKLVVISLSNRAAFQPDPSMLSLENTWEPLSRAVQHTVQDTFPQNVTLINVRQERVVVSSLSHPSVSALALMLFVCNPLNATQSPLLIRSVVEQSKICSSHYEPTVRIGGRDGLCVDVSDNAYNNGNPIILWKCKDQLEVNQLWTLKSDKTIRSKGKCLTTYGYAPGNYVMIYDCSSAVAEATYWDIWDNGTIINPKSGLVLSAESSSMGGTLTVQKNDYRMRQGWRTGNDTSPFVTSIAGFFKLCMEAHGNSMWLDVCDITKEEQQWAVYPDGSIRPVQNTNNCLTCEEHKQGATIVMMGCSNAWASQRWVFKSDGTIYNLYDDMVMDVKSSDPSLKQIILWPYTGNANQMWATLF.

The N-terminal stretch at 1–20 (MKFETTKNKLHGNAYYQAQF) is a signal peptide. Glutamine 21 is modified (pyrrolidone carboxylic acid). Residue glutamate 183 is part of the active site. Intrachain disulfides connect cysteine 266–cysteine 288, cysteine 305–cysteine 324, and cysteine 348–cysteine 365. Positions 279-280 (RS) are cleaved as a propeptide — linker peptide. Positions 292–419 (YEPTVRIGGR…YRMRQGWRTG (128 aa)) constitute a Ricin B-type lectin 1 domain. One copy of the 1-alpha repeat lies at 302 to 344 (DGLCVDVSDNAYNNGNPIILWKCKDQLEVNQLWTLKSDKTIRS). The 1-beta repeat unit spans residues 345-385 (KGKCLTTYGYAPGNYVMIYDCSSAVAEATYWDIWDNGTIIN). N-linked (GlcNAc...) asparagine glycosylation is found at asparagine 380 and asparagine 420. One copy of the 1-gamma repeat lies at 388–420 (SGLVLSAESSSMGGTLTVQKNDYRMRQGWRTGN). In terms of domain architecture, Ricin B-type lectin 2 spans 422 to 546 (TSPFVTSIAG…GNANQMWATL (125 aa)). One copy of the 2-alpha repeat lies at 433–468 (FKLCMEAHGNSMWLDVCDITKEEQQWAVYPDGSIRP). Disulfide bonds link cysteine 436-cysteine 449 and cysteine 475-cysteine 492. The stretch at 472 to 511 (TNNCLTCEEHKQGATIVMMGCSNAWASQRWVFKSDGTIYN) is one 2-beta repeat. The stretch at 514–547 (DDMVMDVKSSDPSLKQIILWPYTGNANQMWATLF) is one 2-gamma repeat.

In the N-terminal section; belongs to the ribosome-inactivating protein family. Type 2 RIP subfamily. As to quaternary structure, heterotetramer of two A and two B chains.

It catalyses the reaction Endohydrolysis of the N-glycosidic bond at one specific adenosine on the 28S rRNA.. Functionally, the A chain is responsible for inhibiting protein synthesis through the catalytic inactivation of 60S ribosomal subunits by removing adenine from position 4,324 of 28S rRNA. Less toxic than abrin-a. Its function is as follows. The B chain is a galactose-specific lectin that facilitates the binding to the cell membrane that precedes endocytosis. This Abrus precatorius (Indian licorice) protein is Agglutinin-1.